The primary structure comprises 124 residues: Small ribosomal subunit protein bS6 (124 aa).

This sequence belongs to the bacterial ribosomal protein bS6 family.

In terms of biological role, binds together with bS18 to 16S ribosomal RNA. In Rippkaea orientalis (strain PCC 8801 / RF-1) (Cyanothece sp. (strain PCC 8801)), this protein is Small ribosomal subunit protein bS6.